The chain runs to 522 residues: MKNWPRLAFIAWVLLRQGMDQLVLSHMPHASLRLLARLMSIGRTHHEPRGVRLRMALERLGPIFVKFGQVLSTRRDLIPHDIANELAKLQDRVPPFPSDVSRAAVVQSLGRPIEEVFASFDADPVASASIAQVHFGVLHDGREVAVKVLRPNVLNIIEADLALLRVAAAWLERLSPDGRRLRPREVVAEFDNYLHDELDLGREAANAAQLRRNMGGLDLIMLPEMIWDLSSAEVLVMERMHGVPISQIETLRAAGIDIPKLARDGVTIFFTQVFRDGFFHADMHPGNIMVSTAPATFGRYIALDFGIVGTLDSRDKEYLAQNFLAFFRRDYRRVAELHIESGWVPASTRVDELEGAVRAVCEPHFDRPLKDISLGQVLLRLFQTSRRFNVEIQPQLVLLQKTLLNVEGLGRQLDPELDLWQTAKPFLERWMNEQVGWRALLGSIKDEAPRYAKLLPELPRLLHDALQAHARPQRPSDELLLALLHEQRRTNRLLLTVFYLIGGFVAGGLFAHWILPGLLHLL.

A Protein kinase domain is found at 119-496 (SFDADPVASA…QRRTNRLLLT (378 aa)). ATP-binding positions include 125–133 (VASASIAQV) and K147. The active-site Proton acceptor is D282. Residues 494–514 (LLTVFYLIGGFVAGGLFAHWI) traverse the membrane as a helical segment.

The protein belongs to the ABC1 family. UbiB subfamily.

It localises to the cell inner membrane. It functions in the pathway cofactor biosynthesis; ubiquinone biosynthesis [regulation]. Its function is as follows. Is probably a protein kinase regulator of UbiI activity which is involved in aerobic coenzyme Q (ubiquinone) biosynthesis. This chain is Probable protein kinase UbiB, found in Leptothrix cholodnii (strain ATCC 51168 / LMG 8142 / SP-6) (Leptothrix discophora (strain SP-6)).